A 542-amino-acid chain; its full sequence is Cytochrome P450 27C1 (542 aa).

The N-terminal 80 residues, Met1–Leu80, are a transit peptide targeting the mitochondrion. Residues Ala20–Pro75 are disordered. The segment covering Pro32–Ala46 has biased composition (low complexity). Cys488 serves as a coordination point for heme.

It belongs to the cytochrome P450 family. Requires heme as cofactor. In terms of tissue distribution, widely expressed, with highest levels in the liver, kidney and pancreas. As to expression, expressed in the skin (at protein level).

The protein resides in the mitochondrion membrane. The enzyme catalyses all-trans-retinol + 2 reduced [adrenodoxin] + O2 + 2 H(+) = all-trans-3,4-didehydroretinol + 2 oxidized [adrenodoxin] + 2 H2O. It carries out the reaction all-trans-retinol + 2 reduced [adrenodoxin] + O2 + 2 H(+) = all-trans-4-hydroxyretinol + 2 oxidized [adrenodoxin] + H2O. The catalysed reaction is all-trans-retinol + 2 reduced [adrenodoxin] + O2 + 2 H(+) = all-trans-3-hydroxyretinol + 2 oxidized [adrenodoxin] + H2O. It participates in cofactor metabolism; retinol metabolism. Its function is as follows. A cytochrome P450 monooxygenase that catalyzes the 3,4 desaturation of all-trans-retinol (also called vitamin A1) to all-trans-3,4-didehydroretinol (also called vitamin A2) in the skin. Desaturates with lower efficiency all-trans retinal and all-trans retinoic acid. Forms minor amounts of 3-hydroxy and 4-hydroxy all-trans-retinol derivatives. Mechanistically, uses molecular oxygen inserting one oxygen atom into a substrate and reducing the second into a water molecule. Two electrons are provided by NADPH via a two-protein mitochondrial transfer system comprising flavoprotein FDXR (adrenodoxin/ferredoxin reductase) and nonheme iron-sulfur protein FDX1 or FDX2 (adrenodoxin/ferredoxin). The sequence is that of Cytochrome P450 27C1 from Homo sapiens (Human).